A 453-amino-acid polypeptide reads, in one-letter code: Plasmepsin II (453 aa).

The Cytoplasmic portion of the chain corresponds to 1–37; that stretch reads MDITVREHDFKHGFIKSNSTFDGLNIDNSKNKKKIQK. A propeptide spanning residues 1-124 is cleaved from the precursor; the sequence is MDITVREHDF…SGLTKTNYLG (124 aa). A helical; Signal-anchor for type II membrane protein membrane pass occupies residues 38-58; it reads GFQILYVLLFCSVMCGLFYYV. The Lumenal portion of the chain corresponds to 59-453; it reads YENVWLQRDN…VGIALAKKNL (395 aa). In terms of domain architecture, Peptidase A1 spans 140–447; it reads FYGDAEVGDN…DYDNQSVGIA (308 aa). Asp-158 is an active-site residue. A disulfide bond links Cys-171 and Cys-176. The active site involves Asp-338. Cys-373 and Cys-409 form a disulfide bridge.

Belongs to the peptidase A1 family. As to quaternary structure, component of the hemozoin formation complex (HFC) composed of falcipains FP2A and/or FP2B, plasmepsins PMII, PMIII/HAP and PMIV, heme detoxifying protein HDP and falcilysin FLN. The HFC complex is involved in hemoglobin degradation and detoxification of heme in the food vacuole during the asexual blood stage. Not N-glycosylated. In terms of processing, proteolytically cleaved into the soluble active mature form in the digestive vacuole by cysteine protease falcipains; the process begins at the early ring stage. Proteolysis requires an acidic environment. In absence of falcipains, autoprocessing may serve as an alternate activation system.

The protein resides in the membrane. The protein localises to the vacuole lumen. It localises to the vacuole membrane. It carries out the reaction Hydrolysis of the bonds linking certain hydrophobic residues in hemoglobin or globin. Also cleaves small molecules substrates such as Ala-Leu-Glu-Arg-Thr-Phe-|-Phe(NO2)-Ser-Phe-Pro-Thr.. With respect to regulation, inhibited by pepstatin A. Inhibited by KNI derived compounds (KNI-10742, 10743, 10395, 10333, and 10343). Its function is as follows. During the asexual blood stage, participates in initial cleavage of native host hemoglobin (Hb) resulting in Hb denaturation. May cleave preferentially denatured hemoglobin that has been cleaved by PMI. Digestion of host Hb is an essential step which provides the parasite with amino acids for protein synthesis, and regulates osmolarity. The polypeptide is Plasmepsin II (Plasmodium falciparum (isolate 3D7)).